A 387-amino-acid polypeptide reads, in one-letter code: MRNAALLMTRATSLRLSLLLLLSFLPDLDGGVRAKELRFVTLVFRHGDRSPIETFPNDPIKESSWPQGFGQLTQLGMAQHYELGQYIRKRYENFLNESYKREQVHVRSTDIDRTLMSAMTNLAALFPPEGISIWNPSLPWQPIPVHTVPVSEDQLLYLPFRNCPRFQELQSETLISEEFQKRLQPYKDFIEVLPKLTGYHDQDLLGIWSKVYDPLFCEGVHNFTLPSWATEDTMTKLKEISELSLLSLYGIHKQKEKSRLQGGVLINEILNHMKSATQPSNRRKLIMYSAHDTTVSGLQMALDVYNGILPPYASCHMMELYFQDGEYFVEMYYRNETRYEPHPLTLPGCTPSCPLAKFVELVAPVISQDWSMECAIRNHKGTEDIIN.

An N-terminal signal peptide occupies residues methionine 1–alanine 34. Position 45 (arginine 45) interacts with substrate. The active-site Nucleophile is histidine 46. Residue arginine 49 participates in substrate binding. Asparagine 96 carries N-linked (GlcNAc...) asparagine glycosylation. Arginine 113 lines the substrate pocket. Cystine bridges form between cysteine 163-cysteine 374, cysteine 217-cysteine 315, and cysteine 349-cysteine 353. Asparagine 222 is a glycosylation site (N-linked (GlcNAc...) asparagine). Histidine 291 contributes to the substrate binding site. The active-site Proton donor is the aspartate 292. Asparagine 335 is a glycosylation site (N-linked (GlcNAc...) asparagine).

The protein belongs to the histidine acid phosphatase family. Homodimer; dimer formation is required for phosphatase activity.

It is found in the secreted. The catalysed reaction is a phosphate monoester + H2O = an alcohol + phosphate. It carries out the reaction 1-(9Z-octadecenoyl)-sn-glycero-3-phosphate + H2O = 1-(9Z-octadecenoyl)-sn-glycerol + phosphate. It catalyses the reaction O-phospho-L-tyrosyl-[protein] + H2O = L-tyrosyl-[protein] + phosphate. Functionally, a non-specific tyrosine phosphatase that dephosphorylates a diverse number of substrates under acidic conditions (pH 4-6) including alkyl, aryl, and acyl orthophosphate monoesters and phosphorylated proteins. Has lipid phosphatase activity and inactivates lysophosphatidic acid in seminal plasma. This chain is Prostatic acid phosphatase (ACP3), found in Bos taurus (Bovine).